The chain runs to 734 residues: Photosystem I P700 chlorophyll a apoprotein A2 (734 aa).

Helical transmembrane passes span isoleucine 46–alanine 69, leucine 135–glutamine 158, leucine 175–isoleucine 199, methionine 273–tyrosine 291, leucine 330–tyrosine 353, alanine 369–isoleucine 395, alanine 417–histidine 439, and phenylalanine 517–valine 535. Residues cysteine 559 and cysteine 568 each coordinate [4Fe-4S] cluster. Helical transmembrane passes span alanine 575–tryptophan 596 and leucine 643–isoleucine 665. Chlorophyll a-binding residues include histidine 654, methionine 662, and tyrosine 670. Phylloquinone is bound at residue tryptophan 671. A helical membrane pass occupies residues leucine 707–alanine 727.

This sequence belongs to the PsaA/PsaB family. The PsaA/B heterodimer binds the P700 chlorophyll special pair and subsequent electron acceptors. PSI consists of a core antenna complex that captures photons, and an electron transfer chain that converts photonic excitation into a charge separation. The eukaryotic PSI reaction center is composed of at least 11 subunits. It depends on P700 is a chlorophyll a/chlorophyll a' dimer, A0 is one or more chlorophyll a, A1 is one or both phylloquinones and FX is a shared 4Fe-4S iron-sulfur center. as a cofactor.

It localises to the plastid. It is found in the chloroplast thylakoid membrane. It carries out the reaction reduced [plastocyanin] + hnu + oxidized [2Fe-2S]-[ferredoxin] = oxidized [plastocyanin] + reduced [2Fe-2S]-[ferredoxin]. Its function is as follows. PsaA and PsaB bind P700, the primary electron donor of photosystem I (PSI), as well as the electron acceptors A0, A1 and FX. PSI is a plastocyanin-ferredoxin oxidoreductase, converting photonic excitation into a charge separation, which transfers an electron from the donor P700 chlorophyll pair to the spectroscopically characterized acceptors A0, A1, FX, FA and FB in turn. Oxidized P700 is reduced on the lumenal side of the thylakoid membrane by plastocyanin. The sequence is that of Photosystem I P700 chlorophyll a apoprotein A2 from Pinus thunbergii (Japanese black pine).